The sequence spans 406 residues: RNA exonuclease 4 (406 aa).

Over residues 1–10 (MAPELSSNWK) the composition is skewed to polar residues. Disordered stretches follow at residues 1-108 (MAPE…TLPS) and 156-181 (AGLTLPGHSSSSPKSNKNGLPLPTDL). Composition is skewed to low complexity over residues 54 to 64 (SQQQQQASNPS), 72 to 82 (SQTQSQPSSQK), and 94 to 108 (SKPTTSSSPNSTLPS). Positions 162-173 (GHSSSSPKSNKN) are enriched in polar residues. The 152-residue stretch at 216 to 367 (YLSIDCEMVG…EDARVAMLLF (152 aa)) folds into the Exonuclease domain. Basic and acidic residues predominate over residues 377–387 (ENSNRYEEGQA). A disordered region spans residues 377–406 (ENSNRYEEGQAKKGGNGGGGGGGKKKKGKK). The segment covering 388–398 (KKGGNGGGGGG) has biased composition (gly residues).

It belongs to the REXO4 family.

Its subcellular location is the nucleus. Exoribonuclease involved in ribosome biosynthesis. Involved in the processing of ITS1, the internal transcribed spacer localized between the 18S and 5.8S rRNAs. In Neurospora crassa (strain ATCC 24698 / 74-OR23-1A / CBS 708.71 / DSM 1257 / FGSC 987), this protein is RNA exonuclease 4 (rex-4).